The primary structure comprises 472 residues: Methanethiol oxidase (472 aa).

The residue at position 2 (alanine 2) is an N-acetylalanine. Residues serine 111, serine 371, and serine 467 each carry the phosphoserine modification.

Belongs to the selenium-binding protein family. In terms of assembly, interacts with USP33. In terms of processing, phosphorylated. The N-terminus is blocked. Widely expressed. Highly expressed in liver, lung, colon, prostate, kidney and pancreas. In brain, present both in neurons and glia (at protein level). Down-regulated in lung adenocarcinoma, colorectal carcinoma and ovarian cancer. Two-fold up-regulated in brain and blood from schizophrenia patients.

It localises to the nucleus. The protein resides in the cytoplasm. The protein localises to the cytosol. It is found in the membrane. The catalysed reaction is methanethiol + O2 + H2O = hydrogen sulfide + formaldehyde + H2O2 + H(+). It participates in organosulfur degradation. Functionally, catalyzes the oxidation of methanethiol, an organosulfur compound known to be produced in substantial amounts by gut bacteria. Selenium-binding protein which may be involved in the sensing of reactive xenobiotics in the cytoplasm. May be involved in intra-Golgi protein transport. This is Methanethiol oxidase (SELENBP1) from Homo sapiens (Human).